A 430-amino-acid polypeptide reads, in one-letter code: Putative cytochrome P450 139 (430 aa).

Cys372 serves as a coordination point for heme.

It belongs to the cytochrome P450 family. Heme serves as cofactor.

The polypeptide is Putative cytochrome P450 139 (cyp139) (Mycobacterium bovis (strain ATCC BAA-935 / AF2122/97)).